Consider the following 407-residue polypeptide: Putative cell wall shaping protein YabE (407 aa).

The N-terminal stretch at 1 to 31 (MKKLFSVKLSKSKVILVAACLLLAGSGTAYA) is a signal peptide. Residues 206-286 (ITRIEKVTDV…DKVIAVGTKQ (81 aa)) enclose the G5 domain.

In terms of biological role, suggested to be involved in cell wall modification. The polypeptide is Putative cell wall shaping protein YabE (yabE) (Bacillus subtilis (strain 168)).